Here is a 156-residue protein sequence, read N- to C-terminus: MKTFVFHIFIFALVAFASASRDSAKKIGSQYEHYATCLTENDAAADDIFTILDITSGHHKNENEHDKQHKNGCVMHCLLEKDGLMTGADYHEEKIREDYIKETGAQPGDKRLEALDTCMNETKDMTDKCDKSLLLVACVLIAEDSLATSTEASTEA.

An N-terminal signal peptide occupies residues 1 to 19 (MKTFVFHIFIFALVAFASA). Cystine bridges form between cysteine 37–cysteine 77, cysteine 73–cysteine 129, and cysteine 118–cysteine 138.

It belongs to the PBP/GOBP family. As to quaternary structure, homodimer.

The protein localises to the secreted. Its function is as follows. Colony queen number, a major feature of social organization, is associated with worker genotype for Gp-9. Colonies are headed by either a single reproductive queen (monogyne form) or multiple queens (polygyne form). Differences in worker Gp-9 genotypes between social forms may cause differences in workers' abilities to recognize queens and regulate their numbers. The chain is Pheromone-binding protein Gp-9 from Solenopsis globularia littoralis (Fire ant).